We begin with the raw amino-acid sequence, 655 residues long: p-hydroxybenzoic acid efflux pump subunit AaeB (655 aa).

10 helical membrane-spanning segments follow: residues 13 to 33, 38 to 58, 69 to 89, 93 to 113, 121 to 141, 152 to 172, 370 to 390, 407 to 427, 431 to 451, and 481 to 501; these read FAVKLASAIVLTLFVGFHFQL, WAVLTAAIVAAGPAFAAGGEP, LRIIGTFIGCIAGLVIIIAMI, LLMILVCCIWAGFCTWISSLV, WGLAGYTALIIVITIQPEPLL, EIVVGIVCAIVADLIFSPRSI, LFWLWTGWTSGSGAMVMIAVV, FIYGTLAALPLGLLYFLVIIP, QSMLLLCLSLAVLGFFLGIEV, and LFLDSALGQIVGCVLAFTVIL.

It belongs to the aromatic acid exporter ArAE (TC 2.A.85) family.

The protein resides in the cell inner membrane. Its function is as follows. Forms an efflux pump with AaeA. Could function as a metabolic relief valve, allowing to eliminate certain compounds when they accumulate to high levels in the cell. The sequence is that of p-hydroxybenzoic acid efflux pump subunit AaeB from Escherichia fergusonii (strain ATCC 35469 / DSM 13698 / CCUG 18766 / IAM 14443 / JCM 21226 / LMG 7866 / NBRC 102419 / NCTC 12128 / CDC 0568-73).